The sequence spans 632 residues: Probable potassium transport system protein Kup (632 aa).

12 helical membrane passes run 20–40, 60–80, 111–131, 146–166, 178–198, 216–236, 257–277, 289–309, 347–367, 379–399, 404–424, and 429–449; these read LLVA…LYTL, ILSL…VMFI, LMVI…MITP, FDGI…ALFL, LFGP…VHGI, FFIV…LALT, WFAL…AILL, LLAP…ATVI, IYIA…VIGF, VAVT…MLLL, PVLA…FFAA, and IVQG…LMST.

The protein belongs to the HAK/KUP transporter (TC 2.A.72) family.

Its subcellular location is the cell inner membrane. It catalyses the reaction K(+)(in) + H(+)(in) = K(+)(out) + H(+)(out). In terms of biological role, transport of potassium into the cell. Likely operates as a K(+):H(+) symporter. The protein is Probable potassium transport system protein Kup of Pseudomonas putida (strain W619).